The following is a 463-amino-acid chain: Putative protein FAM90A2P (463 aa).

Disordered stretches follow at residues 1-42, 67-115, 150-295, and 326-365; these read MTAR…DPRL, ALVP…PQRK, MPVH…PAQA, and ALENLQPPPAATELGPSTSPQMGRRTPAQVPGVDRQPPHS. 3 stretches are compositionally biased toward basic and acidic residues: residues 74 to 83, 97 to 114, and 159 to 170; these read GKKEGKENLK, NKDKGEKEERPRQQDPQR, and PCVDPELADRSA. Over residues 180 to 198 the composition is skewed to low complexity; sequence LASLSPLRKASLRSSSSLG.

Belongs to the FAM90 family.

This is Putative protein FAM90A2P (FAM90A2P) from Homo sapiens (Human).